A 575-amino-acid chain; its full sequence is Carboxylesterase 5A (575 aa).

Positions 1-27 (MSGEWGHLGQTLIWAVWVLAAATEGPA) are cleaved as a signal peptide. Asn-82 carries an N-linked (GlcNAc...) asparagine glycan. A disulfide bridge connects residues Cys-94 and Cys-121. The active-site Acyl-ester intermediate is Ser-226. An intrachain disulfide couples Cys-280 to Cys-291. An N-linked (GlcNAc...) asparagine glycan is attached at Asn-281. Catalysis depends on Glu-345, which acts as the Charge relay system. A glycan (N-linked (GlcNAc...) asparagine) is linked at Asn-363. The Charge relay system role is filled by His-454. N-linked (GlcNAc...) asparagine glycosylation is present at Asn-524.

The protein belongs to the type-B carboxylesterase/lipase family. In terms of processing, N-glycosylated.

Its subcellular location is the secreted. It catalyses the reaction a carboxylic ester + H2O = an alcohol + a carboxylate + H(+). Involved in the detoxification of xenobiotics and in the activation of ester and amide prodrugs. The chain is Carboxylesterase 5A (CES5A) from Canis lupus familiaris (Dog).